The primary structure comprises 492 residues: Amphoterin-induced protein 1 (492 aa).

An N-terminal signal peptide occupies residues Met-1–Ala-27. The LRRNT domain occupies Gly-28–Ser-61. Topologically, residues Gly-28–Thr-371 are extracellular. Cystine bridges form between Cys-34–Cys-40 and Cys-38–Cys-47. 6 LRR repeats span residues Tyr-62–Thr-83, Asn-87–Pro-108, Asn-111–Asp-132, Ala-135–Asp-156, Gln-159–Asp-180, and Lys-186–Gln-206. Residue Asn-72 is glycosylated (N-linked (GlcNAc...) asparagine). The region spanning Leu-208–Glu-272 is the LRRCT domain. Disulfide bonds link Cys-225–Cys-253, Cys-227–Cys-270, and Cys-290–Cys-340. Residues Asn-269, Asn-315, Asn-348, and Asn-359 are each glycosylated (N-linked (GlcNAc...) asparagine). Residues Asn-269–Ser-352 form the Ig-like C2-type domain. The helical transmembrane segment at Ala-372–Leu-392 threads the bilayer. Over Thr-393–Val-492 the chain is Cytoplasmic. The interval Lys-404 to Val-492 is disordered. The segment covering Ser-407 to Asn-423 has biased composition (polar residues). Over residues Gly-430 to Ala-441 the composition is skewed to basic and acidic residues. Phosphoserine occurs at positions 476 and 480.

The protein belongs to the immunoglobulin superfamily. AMIGO family. As to quaternary structure, homodimer, and heterodimer with AMIGO2 and AMIGO3. Interacts with KCNB1. In terms of tissue distribution, expressed in hippocampal and cortical neurons (at protein level). High levels in cerebellum, cerebrum, and retina. Low levels in liver, kidney, small intestine, spleen, lung and heart.

Its subcellular location is the cell membrane. The protein resides in the perikaryon. It localises to the cell projection. The protein localises to the dendrite. Functionally, promotes growth and fasciculation of neurites from cultured hippocampal neurons. May be involved in fasciculation as well as myelination of developing neural axons. May have a role in regeneration as well as neural plasticity in the adult nervous system. May mediate homophilic as well as heterophilic cell-cell interaction and contribute to signal transduction through its intracellular domain. Assembled with KCNB1 modulates the gating characteristics of the delayed rectifier voltage-dependent potassium channel KCNB1. In Mus musculus (Mouse), this protein is Amphoterin-induced protein 1.